The following is a 349-amino-acid chain: Transcription factor HBP-1a (349 aa).

Residues 1–11 (MGSNDPSTPSK) show a composition bias toward polar residues. Disordered stretches follow at residues 1–39 (MGSNDPSTPSKASKPPEQEQPPATTSGTTAPVYPEWPGF), 101–196 (FHYP…NKPM), 224–277 (GATG…QAEC), and 312–349 (NTSLKAKLGESGGGGGSDAVPDMNERGDTNGGSHQKEP). Residues 113 to 124 (PAGAQGAAPGAA) are compositionally biased toward low complexity. Over residues 174–191 (NENGSAQNGVSHSSSHGT) the composition is skewed to polar residues. One can recognise a bZIP domain in the interval 252–315 (ELKKQKRKLS…EELLSKNTSL (64 aa)). The interval 254–273 (KKQKRKLSNRESARRSRLRK) is basic motif. The segment covering 261–277 (SNRESARRSRLRKQAEC) has biased composition (basic and acidic residues). The segment at 280 to 315 (LGQRAEALKSENSSLRIELDRIKKEYEELLSKNTSL) is leucine-zipper. A compositionally biased stretch (basic and acidic residues) spans 334–349 (MNERGDTNGGSHQKEP).

The protein belongs to the bZIP family. As to quaternary structure, binds DNA as a dimer.

The protein localises to the nucleus. In terms of biological role, binds to the hexamer motif 5'-ACGTCA-3' of histone gene promoters. The polypeptide is Transcription factor HBP-1a (Triticum aestivum (Wheat)).